Consider the following 497-residue polypeptide: Bloodstream-specific protein 2 (497 aa).

Residues 1–14 form the signal peptide; it reads MRAIFLVALALATM. Positions 15-124 constitute a Thioredoxin 1 domain; sequence RESTAESLKL…IIKYIKANVG (110 aa). Asn-30 carries an N-linked (GlcNAc...) asparagine glycan. Cysteines 48 and 51 form a disulfide. N-linked (GlcNAc...) asparagine glycans are attached at residues Asn-63, Asn-85, Asn-153, Asn-154, Asn-250, and Asn-278. In terms of domain architecture, Thioredoxin 2 spans 334–455; sequence EPTIKSLPVP…VYEFVRKHVT (122 aa). Residues Cys-378 and Cys-381 each act as nucleophile in the active site. A disulfide bridge links Cys-378 with Cys-381. N-linked (GlcNAc...) asparagine glycans are attached at residues Asn-413, Asn-465, Asn-476, Asn-482, Asn-485, and Asn-488. The disordered stretch occupies residues 461–497; that stretch reads EKPANVTEEKKSEEENKSSKSNESNDSNESNVDKQDL. Positions 467-480 are enriched in basic and acidic residues; the sequence is TEEKKSEEENKSSK. Over residues 481–490 the composition is skewed to low complexity; the sequence is SNESNDSNES.

Belongs to the protein disulfide isomerase family.

This Trypanosoma brucei brucei protein is Bloodstream-specific protein 2 (BS2).